The chain runs to 286 residues: Hydroxysteroid 11-beta-dehydrogenase 1-like protein (286 aa).

Positions 1–17 are cleaved as a signal peptide; it reads MGIHIKRWCFIILVASA. NADP(+)-binding positions include 39-65, 90-91, and 117-119; these read GAST…TARR, DM, and NHI. Serine 168 serves as a coordination point for substrate. The active-site Proton acceptor is tyrosine 181. Residues 181 to 185 and 214 to 220 contribute to the NADP(+) site; these read YAASK and GLIDTQS.

It belongs to the short-chain dehydrogenases/reductases (SDR) family.

The protein localises to the secreted. It catalyses the reaction cortisone + NADPH + H(+) = cortisol + NADP(+). Unidirectional NADP(+)-dependent cortisol dehydrogenase (in vitro). This chain is Hydroxysteroid 11-beta-dehydrogenase 1-like protein (hsd11b1l), found in Xenopus tropicalis (Western clawed frog).